Consider the following 247-residue polypeptide: Small ribosomal subunit protein eS6 (247 aa).

The disordered stretch occupies residues 194 to 247; it reads ALKKKRVTKKREDHAEYTKLLAQRMKEAKERKMERKRSNSRSKGDSIRESTSKK. Positions 217–247 are enriched in basic and acidic residues; that stretch reads RMKEAKERKMERKRSNSRSKGDSIRESTSKK.

It belongs to the eukaryotic ribosomal protein eS6 family. In terms of processing, ribosomal protein S6 is the major substrate of protein kinases in eukaryote ribosomes.

Functionally, component of the 40S small ribosomal subunit. Plays an important role in controlling cell growth and proliferation through the selective translation of particular classes of mRNA. The sequence is that of Small ribosomal subunit protein eS6 (RPS6) from Aplysia californica (California sea hare).